Here is a 188-residue protein sequence, read N- to C-terminus: 3-hydroxyanthranilate 3,4-dioxygenase 2 (188 aa).

Arg46 is an O2 binding site. The Fe cation site is built by His50, Glu70, and His108. Glu70 contacts substrate. Substrate is bound by residues Arg112 and Glu122.

It belongs to the 3-HAO family. The cofactor is Fe(2+).

The protein localises to the cytoplasm. The catalysed reaction is 3-hydroxyanthranilate + O2 = (2Z,4Z)-2-amino-3-carboxymuconate 6-semialdehyde. It functions in the pathway cofactor biosynthesis; NAD(+) biosynthesis; quinolinate from L-kynurenine: step 3/3. In terms of biological role, catalyzes the oxidative ring opening of 3-hydroxyanthranilate to 2-amino-3-carboxymuconate semialdehyde, which spontaneously cyclizes to quinolinate. The protein is 3-hydroxyanthranilate 3,4-dioxygenase 2 (bna1-2) of Aspergillus fumigatus (strain CBS 144.89 / FGSC A1163 / CEA10) (Neosartorya fumigata).